The sequence spans 412 residues: Light-independent protochlorophyllide reductase subunit N (412 aa).

Cys16, Cys41, and Cys102 together coordinate [4Fe-4S] cluster.

Belongs to the BchN/ChlN family. As to quaternary structure, protochlorophyllide reductase is composed of three subunits; ChlL, ChlN and ChlB. Forms a heterotetramer of two ChlB and two ChlN subunits. The cofactor is [4Fe-4S] cluster.

The catalysed reaction is chlorophyllide a + oxidized 2[4Fe-4S]-[ferredoxin] + 2 ADP + 2 phosphate = protochlorophyllide a + reduced 2[4Fe-4S]-[ferredoxin] + 2 ATP + 2 H2O. It functions in the pathway porphyrin-containing compound metabolism; chlorophyll biosynthesis (light-independent). Functionally, component of the dark-operative protochlorophyllide reductase (DPOR) that uses Mg-ATP and reduced ferredoxin to reduce ring D of protochlorophyllide (Pchlide) to form chlorophyllide a (Chlide). This reaction is light-independent. The NB-protein (ChlN-ChlB) is the catalytic component of the complex. In Synechococcus sp. (strain RCC307), this protein is Light-independent protochlorophyllide reductase subunit N.